Reading from the N-terminus, the 456-residue chain is Putative sodium-coupled neutral amino acid transporter 11 (456 aa).

Residues 1-25 (MRAGPRRQHLLPPQDNRAAVGYQRQ) are disordered. A helical membrane pass occupies residues 58–78 (FNVVNSIIGSGIIDFSLILLI). N-linked (GlcNAc...) asparagine glycosylation is present at Asn-94. The next 6 membrane-spanning stretches (helical) occupy residues 98 to 118 (GFPGYILLSVLQFLYPFIAMI), 143 to 163 (VFIGRHFIIGLSTVTFTLPLS), 171 to 191 (LGKVSLISTGLTTLILGIVMA), 206 to 226 (AWVFAKPNAIQAVGVMSFAFI), 252 to 272 (MSIVISVFICIFFATCGYLTF), and 291 to 313 (VTFGRFCYGVTVILTYPMECFVT). Asn-325 carries N-linked (GlcNAc...) asparagine glycosylation. The next 3 helical transmembrane spans lie at 329–349 (VFHIVVTVMVITVATLVSLLI), 351–371 (CLGIVLELNGVLCATPLIFII), and 390–410 (IMSYVMLPIGAAVMVFGFVMA).

It belongs to the amino acid/polyamine transporter 2 family.

Its subcellular location is the membrane. Its function is as follows. Putative sodium-dependent amino acid/proton antiporter. The protein is Putative sodium-coupled neutral amino acid transporter 11 (SLC38A11) of Macaca fascicularis (Crab-eating macaque).